The sequence spans 305 residues: Succinate--CoA ligase [ADP-forming] subunit alpha (305 aa).

Residues 17-20, Lys43, and 96-98 each bind CoA; these read TGKE and ITE. Tyr161 contacts substrate. The Tele-phosphohistidine intermediate role is filled by His249.

This sequence belongs to the succinate/malate CoA ligase alpha subunit family. In terms of assembly, heterotetramer of two alpha and two beta subunits.

It catalyses the reaction succinate + ATP + CoA = succinyl-CoA + ADP + phosphate. The enzyme catalyses GTP + succinate + CoA = succinyl-CoA + GDP + phosphate. Its pathway is carbohydrate metabolism; tricarboxylic acid cycle; succinate from succinyl-CoA (ligase route): step 1/1. Succinyl-CoA synthetase functions in the citric acid cycle (TCA), coupling the hydrolysis of succinyl-CoA to the synthesis of either ATP or GTP and thus represents the only step of substrate-level phosphorylation in the TCA. The alpha subunit of the enzyme binds the substrates coenzyme A and phosphate, while succinate binding and nucleotide specificity is provided by the beta subunit. This chain is Succinate--CoA ligase [ADP-forming] subunit alpha, found in Aquifex aeolicus (strain VF5).